We begin with the raw amino-acid sequence, 195 residues long: Transcriptional regulator LdrP (195 aa).

The HTH crp-type domain maps to 110 to 182 (GELRARIARY…YRRVYLLDLA (73 aa)). Positions 142–161 (HEEIADATASIRESVSKVLA) form a DNA-binding region, H-T-H motif.

Homodimer.

Activates transcription. Positively regulates PcrtB promoter upstream of the crtB operon in a cAMP-independent manner. Regulated genes include genes encoding DNA photolyase, phytoene synthase and cytochrome P450 monooxygenase, which are involved in carotenoid biosynthesis. Positively regulates the light-inducible gene cluster in the megaplasmid in a cAMP-independent manner. The protein is Transcriptional regulator LdrP of Thermus thermophilus (strain ATCC 27634 / DSM 579 / HB8).